Consider the following 1010-residue polypeptide: Contactin-1 (1010 aa).

The signal sequence occupies residues 1–19 (MRFFISHLVTLCFIFCVAD). 6 Ig-like C2-type domains span residues 33 to 123 (PVFE…ATLS), 132 to 215 (PEEH…KSVF), 232 to 317 (PADI…ARVY), 322 to 398 (PEWV…AELK), 404 to 491 (PTFE…GVLE), and 496 to 592 (TRIT…LVVR). Disulfide bonds link cysteine 57-cysteine 106 and cysteine 150-cysteine 203. Residues asparagine 200 and asparagine 249 are each glycosylated (N-linked (GlcNAc...) asparagine). Cysteines 254 and 301 form a disulfide. Asparagine 329 carries an N-linked (GlcNAc...) asparagine glycan. 2 cysteine pairs are disulfide-bonded: cysteine 343–cysteine 382 and cysteine 427–cysteine 475. N-linked (GlcNAc...) asparagine glycosylation is found at asparagine 448, asparagine 464, asparagine 485, and asparagine 512. An intrachain disulfide couples cysteine 517 to cysteine 574. An N-linked (GlcNAc...) asparagine glycan is attached at asparagine 582. Fibronectin type-III domains follow at residues 597 to 695 (PPGG…TEGA), 700 to 797 (APSD…SAQD), 802 to 897 (VPTD…APPS), and 899 to 990 (RPRI…TAGV). Residues 679-689 (GTGEPSMPSQR) show a composition bias toward polar residues. The interval 679–708 (GTGEPSMPSQRIRTEGAPPNVAPSDVGGGG) is disordered. N-linked (GlcNAc...) asparagine glycosylation is present at asparagine 924. Residue serine 984 is the site of GPI-anchor amidated serine attachment. Residues 985–1010 (GATAGVPTLLLGLVLPALGVLAYSGF) constitute a propeptide, removed in mature form.

It belongs to the immunoglobulin superfamily. Contactin family. As to quaternary structure, interacts with TNR.

It is found in the cell membrane. Its function is as follows. Mediates cell surface interactions during nervous system development. Interaction with TNR enhances the neurite outgrowth. The protein is Contactin-1 (CNTN1) of Gallus gallus (Chicken).